The following is a 236-amino-acid chain: Lipoprotein B (236 aa).

The signal sequence occupies residues 1-27 (MNKKYFKKYSSILIFSMSILAPMTLAS). Cys28 carries the N-palmitoyl cysteine lipid modification. The S-diacylglycerol cysteine moiety is linked to residue Cys28. Disordered regions lie at residues 35–112 (EKDK…KSNV) and 134–236 (SEKQ…GDAF). The segment covering 43 to 60 (STNLSEPNKSNTSKTNTF) has biased composition (polar residues). A compositionally biased stretch (basic and acidic residues) spans 61–74 (QDKKDSTNKIDSQE). Polar residues-rich tracts occupy residues 75 to 112 (SSKTQSQNTSESNQNTKVDSSKTNNLATNQNNPSKSNV) and 143 to 157 (NASSLNSKQINNTLK). Over residues 158-175 (NQDKTKQENDQFKQESKD) the composition is skewed to basic and acidic residues. Residues 193-212 (VISSQSTTRLEMPKNDQSNS) show a composition bias toward polar residues. The span at 215-228 (EDNKKSPESPKWWE) shows a compositional bias: basic and acidic residues.

It belongs to the M.pulmonis LipAB lipoprotein family.

The protein resides in the cell membrane. This is Lipoprotein B (lipB) from Mycoplasmopsis pulmonis (strain UAB CTIP) (Mycoplasma pulmonis).